Reading from the N-terminus, the 129-residue chain is Serum amyloid A protein (129 aa).

Residues 1–18 (MKLFPGLLFCSLVLGVSG) form the signal peptide. A Pyrrolidone carboxylic acid modification is found at Gln-19. Positions 92 to 129 (GDSGHGAEDSKADQAANEWGRSGKDPNHFRPAGLPDKY) are disordered. Residues 112 to 129 (RSGKDPNHFRPAGLPDKY) constitute a propeptide, often cleaved during amyloidogenesis.

It belongs to the SAA family. This protein is the precursor of amyloid protein A, which is formed by the removal of residues from the C-terminal end. Expressed by the liver; secreted in plasma.

It localises to the secreted. Functionally, major acute phase reactant. Apolipoprotein of the HDL complex. This Canis lupus familiaris (Dog) protein is Serum amyloid A protein (SAA1).